A 460-amino-acid chain; its full sequence is UDP-glycosyltransferase 91C1 (460 aa).

UDP-alpha-D-glucose is bound by residues T283, V335–Q337, H352–E360, and L374–Q377.

Belongs to the UDP-glycosyltransferase family.

The sequence is that of UDP-glycosyltransferase 91C1 (UGT91C1) from Arabidopsis thaliana (Mouse-ear cress).